We begin with the raw amino-acid sequence, 271 residues long: Monalysin (271 aa).

A propeptide spanning residues 1-33 is cleaved from the precursor; the sequence is MTIKEELGQPQSHSIELDEVSKEAASTRAALTS. A pore-forming domain region spans residues 102–170; sequence IPQNVTTTLS…FTDTTEMKGP (69 aa).

As to quaternary structure, pro-Monalysin forms a stable donut-like 18-mer complex composed of two disk-shaped nonamers held together by N-terminal swapping of the pro-peptides. After proteolytic cleavage, the inactive 18-mer complex probably dissociates into two disk-shaped active nonamers in which the transmembrane segments are unmasked and ready to engage the conformational change leading to the pore formation into the target membrane. Multimerizes into circular-like structures and barrel-like aggregates. In terms of processing, requires N-terminal cleavage to become fully active. The metalloprotease AprA can induce the rapid cleavage of pro-Monalysin into its active form. Can also be processed by trypsin.

The protein localises to the secreted. It is found in the host cell membrane. In terms of biological role, pore-forming toxin that contributes to the virulence of P.entomophila against Drosophila, playing an important role in host intestinal damage and lethality. Displays cytolytic and hemolytic activity. This Pseudomonas entomophila (strain L48) protein is Monalysin.